Here is a 101-residue protein sequence, read N- to C-terminus: NADH-quinone oxidoreductase subunit K (101 aa).

3 helical membrane passes run 4 to 24 (LAHFLVLGAILFAISIVGIFL), 30 to 50 (IVLLMAIELMLLAVNMNFVAF), and 61 to 81 (VFVFFILTVAAAESAIGLAIL).

It belongs to the complex I subunit 4L family. NDH-1 is composed of 14 different subunits. Subunits NuoA, H, J, K, L, M, N constitute the membrane sector of the complex.

The protein localises to the cell inner membrane. The enzyme catalyses a quinone + NADH + 5 H(+)(in) = a quinol + NAD(+) + 4 H(+)(out). Functionally, NDH-1 shuttles electrons from NADH, via FMN and iron-sulfur (Fe-S) centers, to quinones in the respiratory chain. The immediate electron acceptor for the enzyme in this species is believed to be ubiquinone. Couples the redox reaction to proton translocation (for every two electrons transferred, four hydrogen ions are translocated across the cytoplasmic membrane), and thus conserves the redox energy in a proton gradient. This is NADH-quinone oxidoreductase subunit K from Cupriavidus pinatubonensis (strain JMP 134 / LMG 1197) (Cupriavidus necator (strain JMP 134)).